We begin with the raw amino-acid sequence, 281 residues long: MTATRLDGKATRDEIFVELATRAAALKAAGKTPGLGTILVGDDPGSHAYVRGKHADCAKVGLNSIRRDLPADIDQATLCATIDELNANPDCTGYIVQLPLPKHLDENEALERIDPDKDADGLHPTNLGRLVLGKEAPLPCTPRGIVYLLRRYDVKLDGAHVVVIGRGVTVGRPLGLLLTRRSENATVTLCHTGTRDLAALTRQADIIVAAAGVPHMVTADMVKPGAAVVDVGVSRVDDKLTGDVAEDVWDVAGYVSPNPGGVGPLTRAFLLTNVIERAERS.

NADP(+) contacts are provided by residues 165 to 167 (GRG), T192, and V233.

Belongs to the tetrahydrofolate dehydrogenase/cyclohydrolase family. Homodimer.

The catalysed reaction is (6R)-5,10-methylene-5,6,7,8-tetrahydrofolate + NADP(+) = (6R)-5,10-methenyltetrahydrofolate + NADPH. It catalyses the reaction (6R)-5,10-methenyltetrahydrofolate + H2O = (6R)-10-formyltetrahydrofolate + H(+). It functions in the pathway one-carbon metabolism; tetrahydrofolate interconversion. Catalyzes the oxidation of 5,10-methylenetetrahydrofolate to 5,10-methenyltetrahydrofolate and then the hydrolysis of 5,10-methenyltetrahydrofolate to 10-formyltetrahydrofolate. The polypeptide is Bifunctional protein FolD (Mycobacteroides abscessus (strain ATCC 19977 / DSM 44196 / CCUG 20993 / CIP 104536 / JCM 13569 / NCTC 13031 / TMC 1543 / L948) (Mycobacterium abscessus)).